A 408-amino-acid polypeptide reads, in one-letter code: GTPase Obg (408 aa).

Residues 1-159 enclose the Obg domain; the sequence is MKFVDEVSIR…RDLKMEMKVL (159 aa). The interval 127 to 148 is disordered; it reads NTRFKSSTNRAPRQTTPGKPGE. Positions 129–143 are enriched in polar residues; that stretch reads RFKSSTNRAPRQTTP. In terms of domain architecture, OBG-type G spans 160 to 333; the sequence is ADVGLLGLPN…LSHDLMRYLE (174 aa). Residues 166–173, 191–195, 213–216, 283–286, and 314–316 contribute to the GTP site; these read GLPNAGKS, FTTLV, DIPG, NKAD, and SAI. Mg(2+) contacts are provided by Ser173 and Thr193. Residues 385–401 show a composition bias toward acidic residues; the sequence is GDDDGWDDDFEDDEDGP. The interval 385–408 is disordered; the sequence is GDDDGWDDDFEDDEDGPEIIYVRD.

The protein belongs to the TRAFAC class OBG-HflX-like GTPase superfamily. OBG GTPase family. As to quaternary structure, monomer. Mg(2+) serves as cofactor.

It is found in the cytoplasm. An essential GTPase which binds GTP, GDP and possibly (p)ppGpp with moderate affinity, with high nucleotide exchange rates and a fairly low GTP hydrolysis rate. Plays a role in control of the cell cycle, stress response, ribosome biogenesis and in those bacteria that undergo differentiation, in morphogenesis control. In Pseudomonas putida (strain ATCC 700007 / DSM 6899 / JCM 31910 / BCRC 17059 / LMG 24140 / F1), this protein is GTPase Obg.